We begin with the raw amino-acid sequence, 318 residues long: Homoserine kinase (318 aa).

ATP is bound at residue 97–107 (PIGSGLGSSAC).

This sequence belongs to the GHMP kinase family. Homoserine kinase subfamily.

It is found in the cytoplasm. The catalysed reaction is L-homoserine + ATP = O-phospho-L-homoserine + ADP + H(+). It participates in amino-acid biosynthesis; L-threonine biosynthesis; L-threonine from L-aspartate: step 4/5. In terms of biological role, catalyzes the ATP-dependent phosphorylation of L-homoserine to L-homoserine phosphate. The chain is Homoserine kinase from Aliivibrio salmonicida (strain LFI1238) (Vibrio salmonicida (strain LFI1238)).